The primary structure comprises 206 residues: Large ribosomal subunit protein uL4 (206 aa).

It belongs to the universal ribosomal protein uL4 family. In terms of assembly, part of the 50S ribosomal subunit.

In terms of biological role, one of the primary rRNA binding proteins, this protein initially binds near the 5'-end of the 23S rRNA. It is important during the early stages of 50S assembly. It makes multiple contacts with different domains of the 23S rRNA in the assembled 50S subunit and ribosome. Its function is as follows. Forms part of the polypeptide exit tunnel. This chain is Large ribosomal subunit protein uL4, found in Methylocella silvestris (strain DSM 15510 / CIP 108128 / LMG 27833 / NCIMB 13906 / BL2).